The following is an 895-amino-acid chain: Dystroglycan 1 (895 aa).

The N-terminal stretch at 1-29 is a signal peptide; it reads MRMSVGSAVPLPLWGRTFLLLLSVAVTQS. The segment at 30-408 is required for laminin recognition; it reads HWPSEPSEAV…SQIRPTMTIP (379 aa). The interval 49–71 is O-glycosylated at one site; sequence SMHSALSDLHETVPTVVGIPDGT. N-linked (GlcNAc...) asparagine glycosylation occurs at asparagine 141. The cysteines at positions 182 and 264 are disulfide-linked. The interval 316–485 is mucin-like domain; that stretch reads ATPTPVTAIG…PATRMRTTTS (170 aa). O-linked (Man6P...) threonine glycans are attached at residues threonine 317, threonine 319, and threonine 379. Residues 381–500 form a disordered region; that stretch reads TLGPIQPTRV…GEPNQRPELK (120 aa). Polar residues predominate over residues 393–403; it reads AGTTVPSQIRP. Low complexity predominate over residues 413–447; that stretch reads PSTVTTPPTTTTKKPRVSTPRPATPSTDSSTTTTR. The interval 463 to 485 is O-glycosylated at seven sites with GalNAc; sequence TTKAPITRLETASPATRMRTTTS. The Peptidase S72 domain occupies 603–712; sequence KAPARFKAKL…MSITVTGSGS (110 aa). Residues asparagine 641, asparagine 649, and asparagine 661 are each glycosylated (N-linked (GlcNAc...) asparagine). Over 654-749 the chain is Extracellular; the sequence is SIVVEWTNNT…DPEKSSEDDV (96 aa). An intrachain disulfide couples cysteine 669 to cysteine 713. Positions 724-747 are disordered; it reads PMRVPSEAPATEVPDRDPEKSSED. A compositionally biased stretch (basic and acidic residues) spans 736 to 747; the sequence is VPDRDPEKSSED. A helical transmembrane segment spans residues 750-775; sequence YLHTVIPAVVVAAILLIAGIIAMICY. A Nuclear localization signal motif is present at residues 776–782; it reads RKKRKGK. Topologically, residues 776–895 are cytoplasmic; sequence RKKRKGKLTL…YRSPPPYVPP (120 aa). Threonine 790 is subject to Phosphothreonine. Residues 819-895 are required for interaction with CAV3; sequence LQEEKAPLPP…YRSPPPYVPP (77 aa). The tract at residues 823–895 is disordered; the sequence is KAPLPPPEYP…YRSPPPYVPP (73 aa). Over residues 832–846 the composition is skewed to polar residues; the sequence is PNQSMPETTPLNQDT. Pro residues predominate over residues 859-870; sequence SAPPYQPPPPFT. A required for binding DMD and UTRN region spans residues 880–895; the sequence is PKNMTPYRSPPPYVPP. Residues 889–892 carry the PPXY motif motif; the sequence is PPPY. Tyrosine 892 bears the Phosphotyrosine; by SRC mark.

In terms of assembly, monomer. Heterodimer of alpha- and beta-dystroglycan subunits which are the central components of the dystrophin-glycoprotein complex. This complex then can form a dystrophin-associated glycoprotein complex (DGC) which is composed of three subcomplexes: a cytoplasmic complex comprised of DMD (or UTRN), DTNA and a number of syntrophins, such as SNTB1, SNTB2, SNTG1 and SNTG2, the transmembrane dystroglycan complex, and the sarcoglycan-sarcospan complex. Interacts (via the N-terminal of alphaDAG1) with LARGE1; the interaction enhances laminin binding. Interacts with SGCD. Interacts with AGR2 and AGR3. Interacts (betaDAG1) with DMD; the interaction is inhibited by phosphorylation on the PPXY motif. Interacts (betaDAG1, via its PPXY motif) with UTRN (via its WWW and ZZ domains); the interaction is inhibited by phosphorylation on the PPXY motif. Interacts (betaDAG1, via its phosphorylated PPXY motif) with the SH2 domain-containing proteins, FYN, CSK, NCK and SHC. Interacts (betaDAG1) with CAV3 (via a central WW-like domain); the interaction disrupts the binding of DMD. BetaDAG1 directly interacts with ANK3, but not with ANK2; this interaction does not interfere with DMD-binding and is required for retention at costameres. Identified in a dystroglycan complex that contains at least PRX, DRP2, UTRN, DMD and DAG1. Interacts with POMGNT1. BetaDAG1 interacts with CD93. Post-translationally, O-glycosylated. POMGNT1 catalyzes the initial addition of N-acetylglucosamine, giving rise to the GlcNAc(beta1-2)Man(alpha1-)O-Ser/Thr moiety and thus providing the necessary basis for the addition of further carbohydrate moieties. Heavily O-glycosylated comprising of up to two thirds of its mass and the carbohydrate composition differs depending on tissue type. Mucin-type O-glycosylation is important for ligand binding activity. O-mannosylation is found in high abundance in both brain and muscle where the most abundant glycan is Sia-alpha-2-3-Gal-beta-1-4-Glc-NAc-beta-1-2-Man. In muscle, glycosylation on Thr-317, Thr-319 and Thr-379 by a phosphorylated O-mannosyl glycan with the structure 2-(N-acetylamido)-2-deoxygalactosyl-beta-1,3-2-(N-acetylamido)-2-deoxyglucosyl-beta-1,4-6-phosphomannose is mediated by like-acetylglucosaminyltransferase (LARGE1) protein amd is required for laminin binding. O-glycosylated in the N-terminal region with a core 1 or possibly core 8 glycan. The brain form displays a unique glycosylation pattern which is absent in other tissues; this form shows enhanced binding to laminin LAMA5 compared to the skeletal muscle form. In terms of processing, N-glycosylated. Autolytic cleavage produces the alpha and beta subunits. In cutaneous cells, as well as in certain pathological conditions, shedding of beta-dystroglycan can occur releasing a peptide of about 30 kDa. Post-translationally, SRC-mediated phosphorylation of the PPXY motif of the beta subunit recruits SH2 domain-containing proteins, but inhibits binding to WWW domain-containing proteins, DMD and UTRN. This phosphorylation also inhibits nuclear entry. In terms of tissue distribution, expressed in brain (at protein level). Expressed in the myelin sheath of peripheral nerves.

It is found in the secreted. The protein localises to the extracellular space. It localises to the cell membrane. Its subcellular location is the cytoplasm. The protein resides in the cytoskeleton. It is found in the nucleus. The protein localises to the nucleoplasm. It localises to the sarcolemma. Its subcellular location is the postsynaptic cell membrane. In terms of biological role, the dystroglycan complex is involved in a number of processes including laminin and basement membrane assembly, sarcolemmal stability, cell survival, peripheral nerve myelination, nodal structure, cell migration, and epithelial polarization. Its function is as follows. Extracellular peripheral glycoprotein that acts as a receptor for extracellular matrix proteins containing laminin-G domains. Receptor for laminin-2 (LAMA2) and agrin in peripheral nerve Schwann cells. Also acts as a receptor for laminin LAMA5. Functionally, transmembrane protein that plays important roles in connecting the extracellular matrix to the cytoskeleton. Acts as a cell adhesion receptor in both muscle and non-muscle tissues. Receptor for both DMD and UTRN and, through these interactions, scaffolds axin to the cytoskeleton. Also functions in cell adhesion-mediated signaling and implicated in cell polarity. This Bos taurus (Bovine) protein is Dystroglycan 1.